Reading from the N-terminus, the 449-residue chain is UDP-glycosyltransferase 76E6 (449 aa).

Residues serine 274, alanine 333–glutamine 335, histidine 350–glutamate 358, and histidine 372–glutamine 375 each bind UDP-alpha-D-glucose.

This sequence belongs to the UDP-glycosyltransferase family.

The sequence is that of UDP-glycosyltransferase 76E6 (UGT76E6) from Arabidopsis thaliana (Mouse-ear cress).